The sequence spans 950 residues: MTLREGLPLFHQQFTALFKKNLLLSWRNKRATCLHLFSSFFFILLIFSIEESSKASDLTSTRHKNVTDPKALVSLPILPCEDKFFVRLPCFDFVWSGNQSRRVTDIVSAIMANNPGRPIPTNKVQSFTKPEEVDAWFMSHPSQVTGALHFVEKNATVISYGIQTNSSSEKKRGRREDPTFKFLVPLQIAAEREIARSLIGDPKFSWDFGFKEFARPAIGGEVIISAFYLMGPVFFLAFSMFGFVLQLGSVVTEKELKLREAMTTMGVYESAYWLSWLIWEGILTFVSSLFLVLFGMMFQFEFFLKNSFVLVFLLFFLFQFNMIGLAFALSSIISKSSSATTVGFLVFLVGFITQIVTTAGFPYSSAYSIGSRVIWSLFPPNTFSAGLQLLLEATSSPGDSGISWSERAICAGGESTCVITTNKIYIWLVGTFFFWFVLALYFDNIIPNASGVRKSIFYFLKPSYWTGKEGNKVEEGSICSCIGSVPPVEHITPEDEDVLEEEILVKQQAMDGRVDPNIAVQIHGLAKTYPGTTKLGCCKCTKTSPFHAVKGLWMNIAKDQLFCLLGPNGAGKTTTISCLTGINPVTGGDAKIYGNSIRSSVGMSNIRKMIGVCPQFDILWDALSSEEHLHLFASIKGLPPSSIKSIAEKLLVDVKLTGSAKIRAGSYSGGMKRRLSVAIALIGDPKLVFLDEPTTGMDPITRRHVWDIIQESKKGRAIILTTHSMEEADILSDRIGIMAKGRLRCIGTSIRLKSRFGTGFVATVSFIENKKDGAPEPLKRFFKERLKVEPTEENKAFMTFVIPHDKEQLLKGFFAELQDRESEFGIADIQLGLATLEEVFLNIARRAELESATVEGTMVTLELESGIAVEIPVGARFVGIPGTENAENPRGLMVEVYWQQDGSGSMCISGHSAEMRIPENVSVIYEPSSQVLGHGQRRVRGIVIDYESNN.

6 helical membrane-spanning segments follow: residues 31–51, 223–243, 276–296, 308–328, 342–362, and 426–446; these read ATCLHLFSSFFFILLIFSIEE, IISAFYLMGPVFFLAFSMFGF, WLIWEGILTFVSSLFLVLFGM, FVLVFLLFFLFQFNMIGLAFA, VGFLVFLVGFITQIVTTAGFP, and IWLVGTFFFWFVLALYFDNII. In terms of domain architecture, ABC transporter spans 520 to 765; sequence VQIHGLAKTY…FGTGFVATVS (246 aa). ATP is bound at residue 566–573; sequence GPNGAGKT.

Belongs to the ABC transporter superfamily. ABCA family. CPR flippase (TC 3.A.1.211) subfamily. Highly expressed in siliques. Detected in seedlings, rosette leaves, stems and flowers.

The protein resides in the endoplasmic reticulum membrane. Its function is as follows. Mediates the transport of acyl-CoAs and/or free fatty acids to the endoplasmic reticulum. Has no effect on the selectivity of fatty acid incorporation into triacylglycerol or further desaturation steps. The polypeptide is ABC transporter A family member 9 (ABCA9) (Arabidopsis thaliana (Mouse-ear cress)).